Consider the following 226-residue polypeptide: Sugar fermentation stimulation protein homolog (226 aa).

It belongs to the SfsA family.

In Ruminiclostridium cellulolyticum (strain ATCC 35319 / DSM 5812 / JCM 6584 / H10) (Clostridium cellulolyticum), this protein is Sugar fermentation stimulation protein homolog.